Here is a 1416-residue protein sequence, read N- to C-terminus: MAHGEPYYSSKPDKDFNFGSTMARRQMTPTMVTKLPKFVRNSPQVYDWIVRGLIFPTTGKTYFQRVVVITGGFEDGTYGSFAFDGREWVEIYPIEHLNLMSSLKLIHKANALQERLRLSQEEKATLTLDVQFLQHENVRLKELISKPEPRKIQMKWIIVGAVLTFLSLIPGGYAQSQTNNTIFTDVIAACKYSTETLTENLDLRIKLALANITISDKLDAVRQILNFAFVPRSHWLRTVFYYIHYYEMWNIFMFVLAIGTVMRSTRPGTDLITLATSHLSGFRMAVLPTIPFHTTMTLWVMNTLMVCYYFDNLLAITMAILAPILGIIFLCFMEDSNYVSQIRGLIATAVLIAGGHACLTLTGTTTSLFVVILTCRFVRMATIFIGTRFEIRDANGKVVATVPTRIKNAAFDFFQRLKQSGVRVGVNEFVVIKPGALCVIDTPEGKGTGFFSGNDIVTAAHVVGNNTFVNVCYEGLMYEAKVRYMPEKDIAFITCPGDLHPTARLKLSKNPDYSCVTVMAYVNEDLVVSTAAAMVHGNTLSYAVRTQDGMSGAPVCDKYGRVLAVHQTNTGYTGGAVIIDPADFHPVKAPSQVELLKEEIERLKAQLNSAAENPSTVITQQPTATLEQKSVNDSDVVDLVRTAMEREMKILRDEINGILAPFLQKKKGKTKHGRGRVRRNLRKGVKLLTEEEYRELLEKGLDRETFLDLIDRIIGERSGYPDYDDEDYYDEDDDGWGMVGDDVEFDYTEVINFDQAKPTPAPRTTKPKPCPEPEAETQPLDLSQKKDKQLEHEQQVVKPTKPQKNDPQPYSQTYGKAPIWESYDFDWDEDDAKFILPAPPRLTKADEIVLGSKIVKLRTIIETAIKTQNYSALPEAVFELDKAAYEAGLEGFLQRVKSKNKAPKKLQRAPEDQGAQNYHSLDAWKSLLEPPRERRCVPANFPLLGHLPIDRPIFDDKKPRDDLLGLLPEPTWHAFEEYGPTTWGPQAFIKSFDKFFYAEPIDFFSEYPQLCAFADWATYREFRYLEDTRVIHITATEKNTDSTPAYPKMNYFDTEEKYLESYGWAPYIREFTRVFKGDKPEVLWYLFLKKEIIKEEKIRNSDIRQIVCADPIYTRIGACLEAHQNALMKQHTETSVGQCGWSPMEGGFKKTMQRLVNKGNKYFIEFDWTRYDGTIPPSLFRHIKEIRWNFINKDQREKYRHVHEWYVDNLLNRHVLLPSGEVTLQTRGNPSGQFSTTMDNNMINFWLQAFEFAYFNGPNKDLWKTYDTVVYGDDRLSTTPSVPENYEERVIDMYRDIFGMWVKPGKVICRESIVGLSFCGFTVNADLEPVPTSPEKLMASLLKPYKILPDLESLHGKLLCYQLLAAFMAEDHPFKVYVEHCLSRTAKQLRDSGLPARLTEEQLHRIWRGGPKKCDG.

Residues 104–146 (KLIHKANALQERLRLSQEEKATLTLDVQFLQHENVRLKELISK) are a coiled coil. Helical transmembrane passes span 154–174 (MKWI…GGYA), 239–259 (VFYY…LAIG), 286–306 (VLPT…TLMV), 313–333 (LLAI…LCFM), and 344–364 (GLIA…LTGT). Active-site charge relay system; for serine protease activity residues include His461, Asp489, and Ser551. Residues 587–614 (VKAPSQVELLKEEIERLKAQLNSAAENP) are a coiled coil. Tyr693 is modified (O-(5'-phospho-RNA)-tyrosine). Residues 752–815 (NFDQAKPTPA…DPQPYSQTYG (64 aa)) are disordered. Over residues 783–795 (SQKKDKQLEHEQQ) the composition is skewed to basic and acidic residues. The segment covering 805 to 814 (NDPQPYSQTY) has biased composition (polar residues). The RdRp catalytic domain maps to 1161–1287 (KYFIEFDWTR…TTPSVPENYE (127 aa)).

The protein belongs to the astroviridae polyprotein 1AB family. As to quaternary structure, monomer. Cleaved by the viral and host proteases. The protease is probably autocatalytically cleaved.

The protein localises to the host membrane. It catalyses the reaction RNA(n) + a ribonucleoside 5'-triphosphate = RNA(n+1) + diphosphate. Its function is as follows. Responsible for the cleavage of the polyprotein into functional products. Protein covalently attached to the 5' extremity of the genomic and subgenomic RNAs. It may serve as a primer for the replicase. In Homo sapiens (Human), this protein is Non-structural polyprotein 1AB (ORF1).